A 310-amino-acid polypeptide reads, in one-letter code: Methionyl-tRNA formyltransferase (310 aa).

Ser-109–Pro-112 lines the (6S)-5,6,7,8-tetrahydrofolate pocket. The tract at residues Gln-283–Asp-310 is disordered. A compositionally biased stretch (basic and acidic residues) spans Arg-300 to Asp-310.

The protein belongs to the Fmt family.

The catalysed reaction is L-methionyl-tRNA(fMet) + (6R)-10-formyltetrahydrofolate = N-formyl-L-methionyl-tRNA(fMet) + (6S)-5,6,7,8-tetrahydrofolate + H(+). Its function is as follows. Attaches a formyl group to the free amino group of methionyl-tRNA(fMet). The formyl group appears to play a dual role in the initiator identity of N-formylmethionyl-tRNA by promoting its recognition by IF2 and preventing the misappropriation of this tRNA by the elongation apparatus. The polypeptide is Methionyl-tRNA formyltransferase (Thermobifida fusca (strain YX)).